Consider the following 448-residue polypeptide: JmjC domain-containing protein D (448 aa).

The JmjC domain occupies 305 to 448 (EQIPQLRNDI…SLSQSFSIFP (144 aa)).

The sequence is that of JmjC domain-containing protein D (jcdD) from Dictyostelium discoideum (Social amoeba).